Reading from the N-terminus, the 535-residue chain is Light-independent protochlorophyllide reductase subunit B (535 aa).

[4Fe-4S] cluster is bound at residue Asp36. The active-site Proton donor is the Asp292. 428–429 (GL) serves as a coordination point for substrate.

The protein belongs to the ChlB/BchB/BchZ family. In terms of assembly, protochlorophyllide reductase is composed of three subunits; BchL, BchN and BchB. Forms a heterotetramer of two BchB and two BchN subunits. [4Fe-4S] cluster is required as a cofactor.

It catalyses the reaction chlorophyllide a + oxidized 2[4Fe-4S]-[ferredoxin] + 2 ADP + 2 phosphate = protochlorophyllide a + reduced 2[4Fe-4S]-[ferredoxin] + 2 ATP + 2 H2O. It participates in porphyrin-containing compound metabolism; bacteriochlorophyll biosynthesis (light-independent). Functionally, component of the dark-operative protochlorophyllide reductase (DPOR) that uses Mg-ATP and reduced ferredoxin to reduce ring D of protochlorophyllide (Pchlide) to form chlorophyllide a (Chlide). This reaction is light-independent. The NB-protein (BchN-BchB) is the catalytic component of the complex. The chain is Light-independent protochlorophyllide reductase subunit B from Pelodictyon phaeoclathratiforme (strain DSM 5477 / BU-1).